The sequence spans 446 residues: Protein odr-4 homolog (446 aa).

2 helical membrane passes run 81–101 (MLPGGLLVLSVFIIATPELSK) and 424–444 (MGVVIAVAVAVFASIFSFNYF).

It belongs to the ODR-4 family.

It is found in the membrane. Its function is as follows. May play a role in the trafficking of a subset of G-protein coupled receptors. This Gallus gallus (Chicken) protein is Protein odr-4 homolog (ODR4).